We begin with the raw amino-acid sequence, 300 residues long: Protein Bel-1 (300 aa).

The tract at residues 1 to 50 (MDSYEKEESVASTSGIQDLQTLSELVGPENAGEGELTIAEEPEENPRRPR) is disordered. The segment covering 10-23 (VASTSGIQDLQTLS) has biased composition (polar residues). The DNA-binding element occupies 89 to 200 (SKSLCKRLIL…SEGPKPRPRH (112 aa)). The tract at residues 209–244 (FEKHHKPRQKRPRRRSIDNESCASSSDTMANEPGSL) is disordered. The segment covering 211-222 (KHHKPRQKRPRR) has biased composition (basic residues). The short motif at 214-223 (KPRQKRPRRR) is the Nuclear localization signal element. The interval 224–300 (SIDNESCASS…PSGSGEHSVL (77 aa)) is transactivation domain. The span at 227 to 237 (NESCASSSDTM) shows a compositional bias: polar residues.

In terms of assembly, homodimer or homomultimer. Forms complexes with the host nuclear factors NFIA, NFIB, NFIC or NFIX.

The protein localises to the host nucleus. In terms of biological role, transcriptional transactivator that activates the viral internal promoter (IP), thereby enhancing its own expression. This transactivation is repressed by nuclear factor I. Also transactivates the long terminal repeat (LTR) promoter, thereby inducing structural gene expression, initiating the late phase of infection. It is therefore a key regulator of viral gene expression. It directly binds to and activates DNA target sites of viral promoters and those of distinct cellular genes. Required for viral replication. This chain is Protein Bel-1 (bel1), found in Human spumaretrovirus (SFVcpz(hu)).